Reading from the N-terminus, the 303-residue chain is Sporulation regulatory protein (303 aa).

A FtsK domain is found at 26–213; it reads TGRLRAGLRK…HRVNDKQTAE (188 aa). Residue 43–50 coordinates ATP; that stretch reads GANHSGKS.

Its function is as follows. Involved in sporulation inhibition and pock formation. In Streptomyces azureus, this protein is Sporulation regulatory protein (spi).